The following is a 230-amino-acid chain: Ribose-5-phosphate isomerase A (230 aa).

Substrate-binding positions include 31-34 (TGST), 88-91 (DGSD), and 101-104 (KGGG). The active-site Proton acceptor is the glutamate 110. Lysine 128 lines the substrate pocket.

It belongs to the ribose 5-phosphate isomerase family. As to quaternary structure, homodimer.

It carries out the reaction aldehydo-D-ribose 5-phosphate = D-ribulose 5-phosphate. The protein operates within carbohydrate degradation; pentose phosphate pathway; D-ribose 5-phosphate from D-ribulose 5-phosphate (non-oxidative stage): step 1/1. Its function is as follows. Catalyzes the reversible conversion of ribose-5-phosphate to ribulose 5-phosphate. This chain is Ribose-5-phosphate isomerase A, found in Lactobacillus acidophilus (strain ATCC 700396 / NCK56 / N2 / NCFM).